The primary structure comprises 95 residues: Small ribosomal subunit protein uS19 (95 aa).

The protein belongs to the universal ribosomal protein uS19 family.

Functionally, protein S19 forms a complex with S13 that binds strongly to the 16S ribosomal RNA. This is Small ribosomal subunit protein uS19 from Bdellovibrio bacteriovorus (strain ATCC 15356 / DSM 50701 / NCIMB 9529 / HD100).